The primary structure comprises 350 residues: Eukaryotic translation initiation factor 3 subunit I (350 aa).

WD repeat units lie at residues 8 to 49 (GHER…GTLE), 51 to 89 (HQGV…CVYT), 91 to 135 (NSPS…ASLT), 149 to 190 (QNGS…KSLQ), 198 to 240 (EKNV…KVYK), and 296 to 335 (GHFG…KDFL).

The protein belongs to the eIF-3 subunit I family. Component of the eukaryotic translation initiation factor 3 (eIF-3) complex.

The protein resides in the cytoplasm. Functionally, component of the eukaryotic translation initiation factor 3 (eIF-3) complex, which is involved in protein synthesis of a specialized repertoire of mRNAs and, together with other initiation factors, stimulates binding of mRNA and methionyl-tRNAi to the 40S ribosome. The eIF-3 complex specifically targets and initiates translation of a subset of mRNAs involved in cell proliferation. The polypeptide is Eukaryotic translation initiation factor 3 subunit I (Lodderomyces elongisporus (strain ATCC 11503 / CBS 2605 / JCM 1781 / NBRC 1676 / NRRL YB-4239) (Yeast)).